The primary structure comprises 235 residues: Leucyl/phenylalanyl-tRNA--protein transferase (235 aa).

Belongs to the L/F-transferase family.

It is found in the cytoplasm. It catalyses the reaction N-terminal L-lysyl-[protein] + L-leucyl-tRNA(Leu) = N-terminal L-leucyl-L-lysyl-[protein] + tRNA(Leu) + H(+). The enzyme catalyses N-terminal L-arginyl-[protein] + L-leucyl-tRNA(Leu) = N-terminal L-leucyl-L-arginyl-[protein] + tRNA(Leu) + H(+). It carries out the reaction L-phenylalanyl-tRNA(Phe) + an N-terminal L-alpha-aminoacyl-[protein] = an N-terminal L-phenylalanyl-L-alpha-aminoacyl-[protein] + tRNA(Phe). Its function is as follows. Functions in the N-end rule pathway of protein degradation where it conjugates Leu, Phe and, less efficiently, Met from aminoacyl-tRNAs to the N-termini of proteins containing an N-terminal arginine or lysine. This Methylococcus capsulatus (strain ATCC 33009 / NCIMB 11132 / Bath) protein is Leucyl/phenylalanyl-tRNA--protein transferase.